A 571-amino-acid polypeptide reads, in one-letter code: Proline--tRNA ligase (571 aa).

It belongs to the class-II aminoacyl-tRNA synthetase family. ProS type 1 subfamily. Homodimer.

It localises to the cytoplasm. The enzyme catalyses tRNA(Pro) + L-proline + ATP = L-prolyl-tRNA(Pro) + AMP + diphosphate. Its function is as follows. Catalyzes the attachment of proline to tRNA(Pro) in a two-step reaction: proline is first activated by ATP to form Pro-AMP and then transferred to the acceptor end of tRNA(Pro). As ProRS can inadvertently accommodate and process non-cognate amino acids such as alanine and cysteine, to avoid such errors it has two additional distinct editing activities against alanine. One activity is designated as 'pretransfer' editing and involves the tRNA(Pro)-independent hydrolysis of activated Ala-AMP. The other activity is designated 'posttransfer' editing and involves deacylation of mischarged Ala-tRNA(Pro). The misacylated Cys-tRNA(Pro) is not edited by ProRS. The sequence is that of Proline--tRNA ligase from Pseudomonas aeruginosa (strain UCBPP-PA14).